We begin with the raw amino-acid sequence, 62 residues long: DNA gyrase inhibitor YacG (62 aa).

Zn(2+)-binding residues include cysteine 9, cysteine 12, cysteine 27, and cysteine 31. Residues 43 to 52 show a composition bias toward basic and acidic residues; sequence GYRIPGEKAP. The interval 43–62 is disordered; the sequence is GYRIPGEKAPESGGEEPGDE.

This sequence belongs to the DNA gyrase inhibitor YacG family. Interacts with GyrB. It depends on Zn(2+) as a cofactor.

Inhibits all the catalytic activities of DNA gyrase by preventing its interaction with DNA. Acts by binding directly to the C-terminal domain of GyrB, which probably disrupts DNA binding by the gyrase. The polypeptide is DNA gyrase inhibitor YacG (Geobacter sp. (strain M21)).